Reading from the N-terminus, the 473-residue chain is Aspartyl/glutamyl-tRNA(Asn/Gln) amidotransferase subunit B (473 aa).

The protein belongs to the GatB/GatE family. GatB subfamily. Heterotrimer of A, B and C subunits.

The enzyme catalyses L-glutamyl-tRNA(Gln) + L-glutamine + ATP + H2O = L-glutaminyl-tRNA(Gln) + L-glutamate + ADP + phosphate + H(+). It carries out the reaction L-aspartyl-tRNA(Asn) + L-glutamine + ATP + H2O = L-asparaginyl-tRNA(Asn) + L-glutamate + ADP + phosphate + 2 H(+). Functionally, allows the formation of correctly charged Asn-tRNA(Asn) or Gln-tRNA(Gln) through the transamidation of misacylated Asp-tRNA(Asn) or Glu-tRNA(Gln) in organisms which lack either or both of asparaginyl-tRNA or glutaminyl-tRNA synthetases. The reaction takes place in the presence of glutamine and ATP through an activated phospho-Asp-tRNA(Asn) or phospho-Glu-tRNA(Gln). This is Aspartyl/glutamyl-tRNA(Asn/Gln) amidotransferase subunit B from Francisella tularensis subsp. mediasiatica (strain FSC147).